A 119-amino-acid polypeptide reads, in one-letter code: Beta-2-microglobulin (119 aa).

Positions methionine 1–alanine 20 are cleaved as a signal peptide. One can recognise an Ig-like C1-type domain in the interval proline 25 to lysine 114. Cysteines 45 and 100 form a disulfide.

The protein belongs to the beta-2-microglobulin family. As to quaternary structure, heterodimer of an alpha chain and a beta chain. Beta-2-microglobulin is the beta-chain of major histocompatibility complex class I molecules.

The protein resides in the secreted. Functionally, component of the class I major histocompatibility complex (MHC). Involved in the presentation of peptide antigens to the immune system. This Papio anubis (Olive baboon) protein is Beta-2-microglobulin (B2M).